The primary structure comprises 340 residues: Phosphoribosylformylglycinamidine cyclo-ligase (340 aa).

It belongs to the AIR synthase family.

It localises to the cytoplasm. The catalysed reaction is 2-formamido-N(1)-(5-O-phospho-beta-D-ribosyl)acetamidine + ATP = 5-amino-1-(5-phospho-beta-D-ribosyl)imidazole + ADP + phosphate + H(+). It functions in the pathway purine metabolism; IMP biosynthesis via de novo pathway; 5-amino-1-(5-phospho-D-ribosyl)imidazole from N(2)-formyl-N(1)-(5-phospho-D-ribosyl)glycinamide: step 2/2. This chain is Phosphoribosylformylglycinamidine cyclo-ligase, found in Macrococcus caseolyticus (strain JCSC5402) (Macrococcoides caseolyticum).